We begin with the raw amino-acid sequence, 435 residues long: Chromosomal replication initiator protein DnaA (435 aa).

Residues 1 to 70 (MNIGEKILLL…KHLFEIQNSI (70 aa)) are domain I, interacts with DnaA modulators. The tract at residues 70–98 (IKVDVSILLKNQVESKKAEQKSVQKQQHS) is domain II. A domain III, AAA+ region region spans residues 99-313 (LLNPSHTFEN…GILSKLHAYS (215 aa)). Residues Gly-143, Gly-145, Lys-146, and Thr-147 each coordinate ATP. Residues 314 to 435 (QLMHVDIDLQ…ELTNKITSSS (122 aa)) form a domain IV, binds dsDNA region.

It belongs to the DnaA family. As to quaternary structure, oligomerizes as a right-handed, spiral filament on DNA at oriC.

The protein localises to the cytoplasm. In terms of biological role, plays an essential role in the initiation and regulation of chromosomal replication. ATP-DnaA binds to the origin of replication (oriC) to initiate formation of the DNA replication initiation complex once per cell cycle. Binds the DnaA box (a 9 base pair repeat at the origin) and separates the double-stranded (ds)DNA. Forms a right-handed helical filament on oriC DNA; dsDNA binds to the exterior of the filament while single-stranded (ss)DNA is stabiized in the filament's interior. The ATP-DnaA-oriC complex binds and stabilizes one strand of the AT-rich DNA unwinding element (DUE), permitting loading of DNA polymerase. After initiation quickly degrades to an ADP-DnaA complex that is not apt for DNA replication. Binds acidic phospholipids. The polypeptide is Chromosomal replication initiator protein DnaA (Sulfurimonas denitrificans (strain ATCC 33889 / DSM 1251) (Thiomicrospira denitrificans (strain ATCC 33889 / DSM 1251))).